The chain runs to 200 residues: Large ribosomal subunit protein uL13 (200 aa).

The protein belongs to the universal ribosomal protein uL13 family. Component of the large ribosomal subunit. Mature ribosomes consist of a small (40S) and a large (60S) subunit. The 40S subunit contains about 32 different proteins and 1 molecule of RNA (18S). The 60S subunit contains 45 different proteins and 3 molecules of RNA (25S, 5.8S and 5S).

It localises to the cytoplasm. Component of the ribosome, a large ribonucleoprotein complex responsible for the synthesis of proteins in the cell. The small ribosomal subunit (SSU) binds messenger RNAs (mRNAs) and translates the encoded message by selecting cognate aminoacyl-transfer RNA (tRNA) molecules. The large subunit (LSU) contains the ribosomal catalytic site termed the peptidyl transferase center (PTC), which catalyzes the formation of peptide bonds, thereby polymerizing the amino acids delivered by tRNAs into a polypeptide chain. The nascent polypeptides leave the ribosome through a tunnel in the LSU and interact with protein factors that function in enzymatic processing, targeting, and the membrane insertion of nascent chains at the exit of the ribosomal tunnel. This is Large ribosomal subunit protein uL13 from Candida albicans (strain SC5314 / ATCC MYA-2876) (Yeast).